The following is a 206-amino-acid chain: Small ribosomal subunit protein uS4 (206 aa).

The S4 RNA-binding domain occupies 96–156 (GRLDNVVYRM…EKAKNQLRVK (61 aa)).

This sequence belongs to the universal ribosomal protein uS4 family. In terms of assembly, part of the 30S ribosomal subunit. Contacts protein S5. The interaction surface between S4 and S5 is involved in control of translational fidelity.

Functionally, one of the primary rRNA binding proteins, it binds directly to 16S rRNA where it nucleates assembly of the body of the 30S subunit. In terms of biological role, with S5 and S12 plays an important role in translational accuracy. The chain is Small ribosomal subunit protein uS4 from Marinobacter nauticus (strain ATCC 700491 / DSM 11845 / VT8) (Marinobacter aquaeolei).